The following is a 367-amino-acid chain: Inner membrane amino-acid ABC transporter permease protein YhdY (367 aa).

Residues 1–36 are Cytoplasmic-facing; that stretch reads MTKVLLSHPPRPASHNSSRAMVWVRKNLFSSWSNSL. The helical transmembrane segment at 37 to 57 threads the bilayer; sequence LTIGCIWLMWELIPPLLNWAF. The Periplasmic segment spans residues 58-99; that stretch reads LQANWVGSTRADCTKAGACWVFIHERFGQFMYGLYPHDQRWR. The chain crosses the membrane as a helical span at residues 100-120; the sequence is INLALLIGLVSIAPMFWKILP. The Cytoplasmic portion of the chain corresponds to 121-125; it reads HRGRY. Residues 126–146 form a helical membrane-spanning segment; it reads IAAWAVIYPLIVWWLMYGGFF. Residues 147 to 162 lie on the Periplasmic side of the membrane; it reads ALERVETRQWGGLTLT. One can recognise an ABC transmembrane type-1 domain in the interval 159–353; it reads LTLTLIIASV…IFCFSMSRYS (195 aa). A helical transmembrane segment spans residues 163-183; the sequence is LIIASVGIAGALPWGILLALG. Residues 184–192 are Cytoplasmic-facing; that stretch reads RRSHMPIVR. Residues 193-213 traverse the membrane as a helical segment; that stretch reads ILSVIFIEFWRGVPLITVLFM. Topologically, residues 214 to 233 are periplasmic; it reads SSVMLPLFMAEGTSIDKLIR. Residues 234–254 form a helical membrane-spanning segment; sequence ALVGVILFQSAYVAEVVRGGL. The Cytoplasmic segment spans residues 255–291; the sequence is QALPKGQYEAAESLALGYWKTQGLVILPQALKLVIPG. A helical transmembrane segment spans residues 292-312; sequence LVNTIIALFKDTSLVIIIGLF. Over 313–326 the chain is Periplasmic; that stretch reads DLFSSVQQATVDPA. A helical transmembrane segment spans residues 327 to 347; sequence WLGMSTEGYVFAALIYWIFCF. The Cytoplasmic portion of the chain corresponds to 348–367; it reads SMSRYSQYLEKRFNTGRTPH.

The protein belongs to the binding-protein-dependent transport system permease family. HisMQ subfamily.

The protein resides in the cell inner membrane. Probably part of the binding-protein-dependent transport system YdhWXYZ for an amino acid; probably responsible for the translocation of the substrate across the membrane. This is Inner membrane amino-acid ABC transporter permease protein YhdY (yhdY) from Escherichia coli (strain K12).